The primary structure comprises 225 residues: Thymidylate kinase (225 aa).

10–17 (GVEGGGKT) serves as a coordination point for ATP.

This sequence belongs to the thymidylate kinase family.

It carries out the reaction dTMP + ATP = dTDP + ADP. Its function is as follows. Phosphorylation of dTMP to form dTDP in both de novo and salvage pathways of dTTP synthesis. In Trichodesmium erythraeum (strain IMS101), this protein is Thymidylate kinase.